The chain runs to 361 residues: Aromatic amino acid aminotransferase (361 aa).

Lysine 221 is subject to N6-(pyridoxal phosphate)lysine.

The protein belongs to the class-II pyridoxal-phosphate-dependent aminotransferase family. Homodimer. Pyridoxal 5'-phosphate serves as cofactor.

It catalyses the reaction an aromatic L-alpha-amino acid + 2-oxoglutarate = an aromatic oxo-acid + L-glutamate. Aminotransferase that catalyzes the conversion of aromatic amino acids and 2-oxoglutarate into corresponding aromatic oxo acids and L-glutamate. In Mycobacterium marinum (strain ATCC BAA-535 / M), this protein is Aromatic amino acid aminotransferase.